A 371-amino-acid polypeptide reads, in one-letter code: Methionine import ATP-binding protein MetN (371 aa).

The 242-residue stretch at I29–V270 folds into the ABC transporter domain. Position 67-74 (G67–S74) interacts with ATP.

It belongs to the ABC transporter superfamily. Methionine importer (TC 3.A.1.24) family. As to quaternary structure, the complex is composed of two ATP-binding proteins (MetN), two transmembrane proteins (MetI) and a solute-binding protein (MetQ).

The protein resides in the cell inner membrane. The catalysed reaction is L-methionine(out) + ATP + H2O = L-methionine(in) + ADP + phosphate + H(+). It carries out the reaction D-methionine(out) + ATP + H2O = D-methionine(in) + ADP + phosphate + H(+). Part of the ABC transporter complex MetNIQ involved in methionine import. Responsible for energy coupling to the transport system. This chain is Methionine import ATP-binding protein MetN, found in Rhodopseudomonas palustris (strain BisA53).